The primary structure comprises 453 residues: Putative sodium-coupled neutral amino acid transporter 11 (453 aa).

Residues 1–10 are compositionally biased toward polar residues; the sequence is MSYQQPQLSG. The tract at residues 1–34 is disordered; sequence MSYQQPQLSGPLQRETDSSDRESLISGHEHGGKS. Residues 14–32 show a composition bias toward basic and acidic residues; it reads RETDSSDRESLISGHEHGG. 11 consecutive transmembrane segments (helical) span residues 39 to 59, 66 to 86, 106 to 126, 150 to 170, 179 to 199, 222 to 242, 262 to 282, 299 to 319, 337 to 357, 359 to 379, and 398 to 418; these read AVFN…PYSM, LGIL…VLLI, GFPG…IAMI, GWFI…TLPL, LGKI…IVMT, AIQA…CFLV, ILVS…TFTG, VTFG…IECF, VFHT…SLMI, CLGI…IFII, and IMAC…FVMA. 2 N-linked (GlcNAc...) asparagine glycosylation sites follow: Asn438 and Asn443.

It belongs to the amino acid/polyamine transporter 2 family.

It localises to the membrane. Its function is as follows. Putative sodium-dependent amino acid/proton antiporter. The sequence is that of Putative sodium-coupled neutral amino acid transporter 11 (Slc38a11) from Mus musculus (Mouse).